The sequence spans 200 residues: NAD(P)H dehydrogenase (quinone) (200 aa).

A Flavodoxin-like domain is found at 4 to 191 (VLVLYYSSYG…DIARYQGKHV (188 aa)). FMN contacts are provided by residues 10-15 (SSYGHV) and 79-81 (TRF). Tyr12 contributes to the NAD(+) binding site. Position 99 (Trp99) interacts with substrate. Residues 114–120 (STGTQHG) and His135 contribute to the FMN site.

This sequence belongs to the WrbA family. The cofactor is FMN.

The catalysed reaction is a quinone + NADH + H(+) = a quinol + NAD(+). It carries out the reaction a quinone + NADPH + H(+) = a quinol + NADP(+). The polypeptide is NAD(P)H dehydrogenase (quinone) (Burkholderia multivorans (strain ATCC 17616 / 249)).